A 445-amino-acid chain; its full sequence is mRNA cleavage and polyadenylation factor CLP1 (445 aa).

ATP is bound by residues Glu33 and 131–136; that span reads SSGKTS.

Belongs to the Clp1 family. Clp1 subfamily. Component of a pre-mRNA cleavage factor complex. Interacts directly with PCF11.

It is found in the nucleus. In terms of biological role, required for endonucleolytic cleavage during polyadenylation-dependent pre-mRNA 3'-end formation. In Eremothecium gossypii (strain ATCC 10895 / CBS 109.51 / FGSC 9923 / NRRL Y-1056) (Yeast), this protein is mRNA cleavage and polyadenylation factor CLP1.